The chain runs to 284 residues: D-tagatose-1,6-bisphosphate aldolase subunit GatY (284 aa).

Aspartate 82 acts as the Proton donor in catalysis. Histidine 83 and histidine 180 together coordinate Zn(2+). Residue glycine 181 participates in dihydroxyacetone phosphate binding. Residue histidine 208 coordinates Zn(2+). Residues 209–211 (GAS) and 230–233 (NVAT) contribute to the dihydroxyacetone phosphate site.

It belongs to the class II fructose-bisphosphate aldolase family. TagBP aldolase GatY subfamily. In terms of assembly, forms a complex with GatZ. Requires Zn(2+) as cofactor.

The enzyme catalyses D-tagatofuranose 1,6-bisphosphate = D-glyceraldehyde 3-phosphate + dihydroxyacetone phosphate. It participates in carbohydrate metabolism; D-tagatose 6-phosphate degradation; D-glyceraldehyde 3-phosphate and glycerone phosphate from D-tagatose 6-phosphate: step 2/2. Functionally, catalytic subunit of the tagatose-1,6-bisphosphate aldolase GatYZ, which catalyzes the reversible aldol condensation of dihydroxyacetone phosphate (DHAP or glycerone-phosphate) with glyceraldehyde 3-phosphate (G3P) to produce tagatose 1,6-bisphosphate (TBP). Requires GatZ subunit for full activity and stability. Is involved in the catabolism of galactitol. The chain is D-tagatose-1,6-bisphosphate aldolase subunit GatY from Escherichia coli (strain SMS-3-5 / SECEC).